The following is an 808-amino-acid chain: Probable ATP-dependent helicase MJ1401 (808 aa).

Positions 189-217 match the Q motif motif; the sequence is YKIDELDIPEELKEIIKSRGIEELLPVQT. The 171-residue stretch at 221 to 391 folds into the Helicase ATP-binding domain; that stretch reads KAGLLNGDDL…QLNAKLVLYN (171 aa). 234 to 241 lines the ATP pocket; the sequence is SATSSGKT. Residues 336 to 339 carry the DEIH box motif; it reads DEIH. Residues 396–585 form the Helicase C-terminal domain; it reads PLERHIIFCK…EDEEEEQILA (190 aa).

The protein belongs to the DEAD box helicase family.

This Methanocaldococcus jannaschii (strain ATCC 43067 / DSM 2661 / JAL-1 / JCM 10045 / NBRC 100440) (Methanococcus jannaschii) protein is Probable ATP-dependent helicase MJ1401.